A 126-amino-acid chain; its full sequence is Aspartate 1-decarboxylase (126 aa).

The active-site Schiff-base intermediate with substrate; via pyruvic acid is serine 25. Residue serine 25 is modified to Pyruvic acid (Ser). Threonine 57 is a substrate binding site. Tyrosine 58 functions as the Proton donor in the catalytic mechanism. Residue 73 to 75 coordinates substrate; the sequence is GAA.

The protein belongs to the PanD family. Heterooctamer of four alpha and four beta subunits. Pyruvate serves as cofactor. Post-translationally, is synthesized initially as an inactive proenzyme, which is activated by self-cleavage at a specific serine bond to produce a beta-subunit with a hydroxyl group at its C-terminus and an alpha-subunit with a pyruvoyl group at its N-terminus.

Its subcellular location is the cytoplasm. The enzyme catalyses L-aspartate + H(+) = beta-alanine + CO2. It participates in cofactor biosynthesis; (R)-pantothenate biosynthesis; beta-alanine from L-aspartate: step 1/1. In terms of biological role, catalyzes the pyruvoyl-dependent decarboxylation of aspartate to produce beta-alanine. The protein is Aspartate 1-decarboxylase of Methylococcus capsulatus (strain ATCC 33009 / NCIMB 11132 / Bath).